A 68-amino-acid chain; its full sequence is Conotoxin Cal14.13c (68 aa).

An N-terminal signal peptide occupies residues 1-20 (MKLCVVXVLLMLAMPFNGGE). A propeptide spanning residues 21–68 (ASRFFNQHARSQRSGMKTRGIWCDPPCPEGETCRGGECSDEFNGDLGG) is cleaved from the precursor. Leu-66 is subject to Leucine amide.

Contains 2 disulfide bonds. In terms of tissue distribution, expressed by the venom duct.

The protein localises to the secreted. Its function is as follows. Probable neurotoxin with unknown target. Possibly targets ion channels. This Californiconus californicus (California cone) protein is Conotoxin Cal14.13c.